The primary structure comprises 433 residues: Phosphomethylpyrimidine synthase (433 aa).

Residues Asn69, Met98, Tyr127, His163, 185–187, 226–229, and Glu265 each bind substrate; these read SRG and DACR. His269 is a binding site for Zn(2+). Tyr292 is a binding site for substrate. His333 lines the Zn(2+) pocket. Positions 409, 412, and 416 each coordinate [4Fe-4S] cluster.

This sequence belongs to the ThiC family. Requires [4Fe-4S] cluster as cofactor.

The enzyme catalyses 5-amino-1-(5-phospho-beta-D-ribosyl)imidazole + S-adenosyl-L-methionine = 4-amino-2-methyl-5-(phosphooxymethyl)pyrimidine + CO + 5'-deoxyadenosine + formate + L-methionine + 3 H(+). It participates in cofactor biosynthesis; thiamine diphosphate biosynthesis. Functionally, catalyzes the synthesis of the hydroxymethylpyrimidine phosphate (HMP-P) moiety of thiamine from aminoimidazole ribotide (AIR) in a radical S-adenosyl-L-methionine (SAM)-dependent reaction. The sequence is that of Phosphomethylpyrimidine synthase from Clostridioides difficile (strain 630) (Peptoclostridium difficile).